The sequence spans 157 residues: DNA gyrase inhibitor (157 aa).

This sequence belongs to the DNA gyrase inhibitor family. Interacts with DNA gyrase.

The protein localises to the cytoplasm. In terms of biological role, inhibits the supercoiling activity of DNA gyrase. Acts by inhibiting DNA gyrase at an early step, prior to (or at the step of) binding of DNA by the gyrase. It protects cells against toxins that target DNA gyrase, by inhibiting activity of these toxins and reducing the formation of lethal double-strand breaks in the cell. The polypeptide is DNA gyrase inhibitor (Shigella boydii serotype 18 (strain CDC 3083-94 / BS512)).